Here is a 218-residue protein sequence, read N- to C-terminus: Thymidylate kinase (218 aa).

15-22 (GLDRSGKS) provides a ligand contact to ATP.

It belongs to the thymidylate kinase family.

The catalysed reaction is dTMP + ATP = dTDP + ADP. It functions in the pathway pyrimidine metabolism; dTTP biosynthesis. Its function is as follows. Catalyzes the conversion of dTMP to dTDP. This chain is Thymidylate kinase, found in Caenorhabditis elegans.